A 727-amino-acid polypeptide reads, in one-letter code: Pollen-specific leucine-rich repeat extensin-like protein 3 (727 aa).

The N-terminal stretch at 1-22 (MPHIYKQPLGIFQGFVPTLTDA) is a signal peptide. The LRR 1 repeat unit spans residues 19 to 43 (LTDAEVSFIAQRQLLTLPENGELPD). An N-linked (GlcNAc...) asparagine glycan is attached at Asn80. 9 LRR repeats span residues 107-131 (VAVVAGVDLNGADIAGHLPAELGLM), 132-154 (TDVAMFHLNSNRFCGIIPKSFEK), 156-179 (SLMHEFDVSNNRFVGPFPSVVLSW), 180-202 (PAVKFIDVRYNDFEGQVPPELFK), 203-226 (KDLDAIFLNNNRFTSTIPDSLGES), 228-249 (ASVVTFAHNKFSGCIPRSIGNM), 250-273 (KNLNEIIFKDNSLGGCFPSEIGKL), 275-296 (NVNVFDASMNSFTGVLPPSFVG), and 297-321 (LTSMEEFDISGNKLTGFIPENICKL). N-linked (GlcNAc...) asparagine glycosylation occurs at Asn326. Positions 381–727 (SKDKCAGGSS…SPPPPMFQGY (347 aa)) are disordered. 5 stretches are compositionally biased toward pro residues: residues 397 to 419 (SPSPVPTRPVHKPQPPKESPQPN), 446 to 457 (SPPPASSPPTSP), 466 to 479 (VHKPQPPKESPQPN), 492 to 677 (SPPP…PKMS), and 718 to 727 (SPPPPMFQGY). The tract at residues 432–727 (SPPPPQQPHH…SPPPPMFQGY (296 aa)) is contains the Ser-Pro(4) repeats.

Post-translationally, hydroxylated on proline residues in the S-P-P-P-P repeat. In terms of processing, O-glycosylated on hydroxyprolines. As to expression, expressed in flowers, stamen, pollen, and pollinated carpels.

It is found in the secreted. Its subcellular location is the cell wall. Modulates cell morphogenesis by regulating cell wall formation and assembly, and/or growth polarization. The sequence is that of Pollen-specific leucine-rich repeat extensin-like protein 3 (PEX3) from Arabidopsis thaliana (Mouse-ear cress).